The primary structure comprises 372 residues: Serine/threonine-protein kinase 17B (372 aa).

Positions 33-293 (ILTSKELGRG…AEICLSHSWL (261 aa)) constitute a Protein kinase domain. ATP contacts are provided by residues 39-47 (LGRGKFAVV) and lysine 62. Aspartate 158 functions as the Proton acceptor in the catalytic mechanism. The segment at 305–362 (EETSSSSQTQDHSVRSSEDKTSKSSCNGTCGDREDKENIPEDSSMVSKRFRFDDSLPN) is disordered. The segment covering 316–326 (HSVRSSEDKTS) has biased composition (basic and acidic residues).

It belongs to the protein kinase superfamily. CAMK Ser/Thr protein kinase family. DAP kinase subfamily. Interacts with CHP1; the interaction induces CHP1 to translocate from the Golgi to the nucleus. Autophosphorylated. In terms of tissue distribution, highly expressed in placenta, lung, pancreas. Lower levels in heart, brain, liver, skeletal muscle and kidney.

The protein resides in the nucleus. The protein localises to the cell membrane. It is found in the endoplasmic reticulum-Golgi intermediate compartment. The catalysed reaction is L-seryl-[protein] + ATP = O-phospho-L-seryl-[protein] + ADP + H(+). The enzyme catalyses L-threonyl-[protein] + ATP = O-phospho-L-threonyl-[protein] + ADP + H(+). Phosphorylates myosin light chains. Acts as a positive regulator of apoptosis. The sequence is that of Serine/threonine-protein kinase 17B (STK17B) from Homo sapiens (Human).